Here is a 307-residue protein sequence, read N- to C-terminus: Ribonuclease Z (307 aa).

The Zn(2+) site is built by His63, His65, Asp67, His68, His143, Asp213, and His271. Asp67 acts as the Proton acceptor in catalysis.

Belongs to the RNase Z family. In terms of assembly, homodimer. Zn(2+) is required as a cofactor.

The catalysed reaction is Endonucleolytic cleavage of RNA, removing extra 3' nucleotides from tRNA precursor, generating 3' termini of tRNAs. A 3'-hydroxy group is left at the tRNA terminus and a 5'-phosphoryl group is left at the trailer molecule.. Zinc phosphodiesterase, which displays some tRNA 3'-processing endonuclease activity. Probably involved in tRNA maturation, by removing a 3'-trailer from precursor tRNA. In Lactococcus lactis subsp. lactis (strain IL1403) (Streptococcus lactis), this protein is Ribonuclease Z.